Here is a 350-residue protein sequence, read N- to C-terminus: Biotin synthase 1 (350 aa).

Residues 71 to 296 (EEVEVEGIIS…KTILRFAGGR (226 aa)) form the Radical SAM core domain. 3 residues coordinate [4Fe-4S] cluster: Cys-86, Cys-90, and Cys-93. Cys-129, Cys-221, and Arg-291 together coordinate [2Fe-2S] cluster.

It belongs to the radical SAM superfamily. Biotin synthase family. Homodimer. It depends on [4Fe-4S] cluster as a cofactor. Requires [2Fe-2S] cluster as cofactor.

The enzyme catalyses (4R,5S)-dethiobiotin + (sulfur carrier)-SH + 2 reduced [2Fe-2S]-[ferredoxin] + 2 S-adenosyl-L-methionine = (sulfur carrier)-H + biotin + 2 5'-deoxyadenosine + 2 L-methionine + 2 oxidized [2Fe-2S]-[ferredoxin]. The protein operates within cofactor biosynthesis; biotin biosynthesis; biotin from 7,8-diaminononanoate: step 2/2. Catalyzes the conversion of dethiobiotin (DTB) to biotin by the insertion of a sulfur atom into dethiobiotin via a radical-based mechanism. The polypeptide is Biotin synthase 1 (Corynebacterium diphtheriae (strain ATCC 700971 / NCTC 13129 / Biotype gravis)).